Here is an 89-residue protein sequence, read N- to C-terminus: Acyl carrier protein MbtL (89 aa).

A Carrier domain is found at 8–83 (NHVSAELLGI…DLQAAIAAEP (76 aa)). Position 43 is an O-(pantetheine 4'-phosphoryl)serine (serine 43).

Post-translationally, 4'-phosphopantetheine is transferred from CoA to a specific serine of apo-ACP, leading to the activated holo-ACP form.

It localises to the cytoplasm. The protein operates within siderophore biosynthesis; mycobactin biosynthesis. Functionally, acyl carrier protein involved in the formation of acyl-S-ACP intermediates within the mycobactin biosynthesis process. This is Acyl carrier protein MbtL (mbtL) from Mycolicibacterium paratuberculosis (strain ATCC BAA-968 / K-10) (Mycobacterium paratuberculosis).